Here is a 1555-residue protein sequence, read N- to C-terminus: Pre-mRNA cleavage complex 2 protein Pcf11 (1555 aa).

Residue S2 is modified to N-acetylserine. The CID domain occupies 14–142 (AREDACRDYQ…ALDVRVNSLD (129 aa)). Position 120 is a phosphoserine; by WNK1 (S120). T121 bears the Phosphothreonine; by WNK1 mark. The interval 167–186 (NKSPEEPSTPGTVVSSPSIS) is disordered. S169 and S182 each carry phosphoserine. Residues 174 to 186 (STPGTVVSSPSIS) show a composition bias toward low complexity. A coiled-coil region spans residues 202 to 239 (QLIRQQLLAKQKQLLELQQKKLELELEQAKAQLAVSLS). Residues 266-648 (VKAPHQVPVQ…QQQHRLSVDA (383 aa)) are disordered. K291 participates in a covalent cross-link: Glycyl lysine isopeptide (Lys-Gly) (interchain with G-Cter in SUMO2). Positions 307–317 (HGKDQSHRKEF) are enriched in basic and acidic residues. Residues 320 to 333 (NTLNQSDTKTSKTI) are compositionally biased toward polar residues. Residue K328 forms a Glycyl lysine isopeptide (Lys-Gly) (interchain with G-Cter in SUMO2) linkage. 3 stretches are compositionally biased toward basic and acidic residues: residues 342–364 (KQEK…DSKS), 380–421 (HTKD…DVKE), and 427–442 (EKKD…EHRL). A Glycyl lysine isopeptide (Lys-Gly) (interchain with G-Cter in SUMO2) cross-link involves residue K456. T459 bears the Phosphothreonine mark. The segment covering 475 to 486 (STRKRSRSRSPK) has biased composition (basic residues). 4 positions are modified to phosphoserine: S489, S494, S509, and S511. A compositionally biased stretch (basic residues) spans 494–508 (SPKRRDRRSPKRRQR). The span at 529–567 (SHMEEFTPPSREDRNAKRSTKQDIRDPRRMKKTEEERPQ) shows a compositional bias: basic and acidic residues. Positions 568–578 (ETTNQHSTKSG) are enriched in polar residues. Residues 599–615 (SGWEENKSLQQVDEHSK) show a composition bias toward basic and acidic residues. Residue S645 is modified to Phosphoserine. Residue K654 forms a Glycyl lysine isopeptide (Lys-Gly) (interchain with G-Cter in SUMO2) linkage. Residue S705 is modified to Phosphoserine. 2 disordered regions span residues 707 to 732 (FNDR…PASR) and 749 to 781 (RPLF…PRID). Residues 716–725 (PRYEDSDKPF) are compositionally biased toward basic and acidic residues. Residue K723 forms a Glycyl lysine isopeptide (Lys-Gly) (interchain with G-Cter in SUMO2) linkage. Phosphoserine is present on residues S728 and S777. Phosphothreonine is present on T785. S794 carries the post-translational modification Phosphoserine. Residues R805, R820, and R833 each carry the asymmetric dimethylarginine modification. At S851 the chain carries Phosphoserine. Residues R929, R942, R955, R981, R994, and R1007 each carry the asymmetric dimethylarginine modification. The tract at residues 1056–1081 (HGQPGPRFERTPGQPGPQRFDGPPGQ) is disordered. Asymmetric dimethylarginine occurs at positions 1093 and 1104. 2 disordered regions span residues 1127 to 1147 (VSFN…NAPS) and 1159 to 1187 (FDSP…RASG). The residue at position 1161 (S1161) is a Phosphoserine. The segment covering 1162–1175 (PQGPNFNGPHGPGN) has biased composition (low complexity). K1278 participates in a covalent cross-link: Glycyl lysine isopeptide (Lys-Gly) (interchain with G-Cter in SUMO2). A compositionally biased stretch (polar residues) spans 1289–1298 (SATTQVSEVT). A disordered region spans residues 1289–1315 (SATTQVSEVTAQPPPEEEEDQNEDQDV). Acidic residues predominate over residues 1303–1315 (PEEEEDQNEDQDV). Residues K1419, K1511, and K1524 each participate in a glycyl lysine isopeptide (Lys-Gly) (interchain with G-Cter in SUMO2) cross-link. Positions 1516–1555 (EPCDSPKVKEERIDTPPACTEESIATPSEIKTENDTVESV) are disordered. Over residues 1519–1529 (DSPKVKEERID) the composition is skewed to basic and acidic residues. T1530 is subject to Phosphothreonine. Residue K1546 forms a Glycyl lysine isopeptide (Lys-Gly) (interchain with G-Cter in SUMO2) linkage.

As to quaternary structure, associates with the phosphorylated CTD domain of POLR2A /RNA polymerase II. Phosphorylation at Ser-120 and/or Thr-121 by WNK1 weakens its association with POLR2A/RNA polymerase II, promoting transcript release from the chromatin template and mRNA export to the cytoplasm.

It localises to the nucleus. Component of pre-mRNA cleavage complex II, which promotes transcription termination by RNA polymerase II. This is Pre-mRNA cleavage complex 2 protein Pcf11 from Homo sapiens (Human).